The following is a 152-amino-acid chain: Transcriptional repressor NrdR (152 aa).

A zinc finger spans residues 3 to 34 (CPFCNHGELKVIDSRNAPEANAIKRRRECLKC). Residues 48–138 (LQVLKRDGRY…VYRRFKDVGE (91 aa)) enclose the ATP-cone domain.

It belongs to the NrdR family. It depends on Zn(2+) as a cofactor.

Negatively regulates transcription of bacterial ribonucleotide reductase nrd genes and operons by binding to NrdR-boxes. This chain is Transcriptional repressor NrdR, found in Chlamydia pneumoniae (Chlamydophila pneumoniae).